The sequence spans 705 residues: Putative membrane protein SCO6666 (705 aa).

The next 13 helical transmembrane spans lie at 16 to 36, 144 to 164, 177 to 197, 201 to 221, 232 to 252, 280 to 300, 306 to 326, 360 to 380, 504 to 524, 528 to 548, 561 to 581, 615 to 635, and 636 to 656; these read VMLL…GVFG, LHGI…PLLG, NAEL…FGGL, GLPL…LFGF, IQVT…LMLV, LFSG…PSTF, LAVA…LPAL, VAVL…VTGM, ALTV…SVLL, TVAT…WVFQ, LGAL…GLAM, VVTC…TGGF, and SPIL…ATVV.

The protein belongs to the resistance-nodulation-cell division (RND) (TC 2.A.6) family. MmpL subfamily.

Its subcellular location is the cell membrane. The sequence is that of Putative membrane protein SCO6666 from Streptomyces coelicolor (strain ATCC BAA-471 / A3(2) / M145).